The primary structure comprises 84 residues: CDC42 small effector protein 2 (84 aa).

Residues cysteine 10 and cysteine 11 are each lipidated (S-palmitoyl cysteine). Residues 29–42 form the CRIB domain; it reads IGEPTNFVHTAHVG. Phosphoserine is present on residues serine 43 and serine 52.

The protein belongs to the CDC42SE/SPEC family. Interacts with CDC42 (in GTP-bound form). Interacts weakly with RAC1 and not at all with RHOA.

Its subcellular location is the cytoplasm. The protein localises to the cytoskeleton. It is found in the cell membrane. It localises to the cell projection. The protein resides in the phagocytic cup. Its function is as follows. Probably involved in the organization of the actin cytoskeleton by acting downstream of CDC42, inducing actin filament assembly. Alters CDC42-induced cell shape changes. In activated T-cells, may play a role in CDC42-mediated F-actin accumulation at the immunological synapse. May play a role in early contractile events in phagocytosis in macrophages. In Bos taurus (Bovine), this protein is CDC42 small effector protein 2 (CDC42SE2).